The primary structure comprises 148 residues: Urease accessory protein UreE (148 aa).

The protein belongs to the UreE family.

Its subcellular location is the cytoplasm. Involved in urease metallocenter assembly. Binds nickel. Probably functions as a nickel donor during metallocenter assembly. The chain is Urease accessory protein UreE from Halalkalibacterium halodurans (strain ATCC BAA-125 / DSM 18197 / FERM 7344 / JCM 9153 / C-125) (Bacillus halodurans).